The sequence spans 351 residues: Snurportin-1 (351 aa).

Disordered stretches follow at residues 1–66 (MESS…QKGI) and 294–322 (EQKKKVNEQKEDPHTMEAEEDVESDEYDS). A compositionally biased stretch (basic and acidic residues) spans 8–42 (LYKKGLDIGEQQKQRQKELLKQQKLRRQQEQDDYR). Residues 52 to 62 (PRKKSGKRSGH) are compositionally biased toward basic residues. A coiled-coil region spans residues 274–330 (VLQYMDAFEQKLAEHRRTLKEQKKKVNEQKEDPHTMEAEEDVESDEYDSLKRVLDQQ). The span at 294-310 (EQKKKVNEQKEDPHTME) shows a compositional bias: basic and acidic residues. The segment covering 311 to 320 (AEEDVESDEY) has biased composition (acidic residues).

It belongs to the snurportin family. As to quaternary structure, interacts with components of the snRNP complex including SmB and Smn; these interactions are RNA-dependent. Interacts with importin-7 msk but not with importin subunit beta Fs(2)Ket; the interaction is RNA-dependent.

The protein localises to the nucleus. The protein resides in the cytoplasm. It is found in the U-body. It localises to the nucleus speckle. Its subcellular location is the cajal body. In terms of biological role, functions as an U snRNP-specific nuclear import adapter. Involved in the trimethylguanosine (m3G)-cap-dependent nuclear import of U snRNPs. Binds specifically to the terminal m3G-cap U snRNAs. The chain is Snurportin-1 from Drosophila melanogaster (Fruit fly).